Consider the following 286-residue polypeptide: MEGKEEDVRVGANKFPERQPIGTSAQTDKDYKEPPPAPFFEPGELSSWSFYRAGIAEFIATFLFLYITVLTVMGVKRAPNMCASVGIQGIAWAFGGMIFALVYCTAGISGGHINPAVTFGLFLARKLSLTRAVFYIVMQCLGAICGAGVVKGFQPNPYQTLGGGANTVAHGYTKGSGLGAEIIGTFVLVYTVFSATDAKRSARDSHVPILAPLPIGFAVFLVHLATIPITGTGINPARSLGAAIIYNKDHAWDDHWIFWVGPFIGAALAALYHQLVIRAIPFKSRS.

At Met-1 the chain carries N-acetylmethionine. Residues 1–33 are disordered; it reads MEGKEEDVRVGANKFPERQPIGTSAQTDKDYKE. The Cytoplasmic segment spans residues 1 to 54; sequence MEGKEEDVRVGANKFPERQPIGTSAQTDKDYKEPPPAPFFEPGELSSWSFYRAG. Residues 55–75 traverse the membrane as a helical segment; it reads IAEFIATFLFLYITVLTVMGV. The Extracellular segment spans residues 76 to 81; that stretch reads KRAPNM. Residues 82–102 form a helical membrane-spanning segment; that stretch reads CASVGIQGIAWAFGGMIFALV. Over 103–132 the chain is Cytoplasmic; sequence YCTAGISGGHINPAVTFGLFLARKLSLTRA. The NPA 1 signature appears at 114 to 116; it reads NPA. Residues 133–153 form a helical membrane-spanning segment; it reads VFYIVMQCLGAICGAGVVKGF. The Extracellular segment spans residues 154 to 174; sequence QPNPYQTLGGGANTVAHGYTK. Residues 175–195 traverse the membrane as a helical segment; sequence GSGLGAEIIGTFVLVYTVFSA. Topologically, residues 196 to 208 are cytoplasmic; it reads TDAKRSARDSHVP. The chain crosses the membrane as a helical span at residues 209-229; that stretch reads ILAPLPIGFAVFLVHLATIPI. Residues 230 to 256 lie on the Extracellular side of the membrane; sequence TGTGINPARSLGAAIIYNKDHAWDDHW. The NPA 2 signature appears at 235–237; sequence NPA. Residues 257–277 form a helical membrane-spanning segment; sequence IFWVGPFIGAALAALYHQLVI. The Cytoplasmic segment spans residues 278-286; sequence RAIPFKSRS. Residue Ser-284 is modified to Phosphoserine.

It belongs to the MIP/aquaporin (TC 1.A.8) family. PIP (TC 1.A.8.11) subfamily. Expressed in roots, above ground, ripening fruit, flower buds, green siliques and senescing leaves.

It is found in the cell membrane. Its function is as follows. Water channel required to facilitate the transport of water across cell membrane. Its function is impaired by Hg(2+). The polypeptide is Aquaporin PIP1-3 (PIP1-3) (Arabidopsis thaliana (Mouse-ear cress)).